The sequence spans 198 residues: Photosystem I assembly protein Ycf4 (198 aa).

Positions 1 to 20 (MTASTTINKGDSPNGDSSAS) are disordered. 2 consecutive transmembrane segments (helical) span residues 36-58 (YWWASIVTLGASGFFLAGISSYL) and 78-100 (LVMGLYGTAGLLLASYLWLVILW).

Belongs to the Ycf4 family.

It localises to the cellular thylakoid membrane. Seems to be required for the assembly of the photosystem I complex. The protein is Photosystem I assembly protein Ycf4 of Nostoc sp. (strain PCC 7120 / SAG 25.82 / UTEX 2576).